We begin with the raw amino-acid sequence, 291 residues long: ATP synthase gamma chain (291 aa).

Belongs to the ATPase gamma chain family. In terms of assembly, F-type ATPases have 2 components, CF(1) - the catalytic core - and CF(0) - the membrane proton channel. CF(1) has five subunits: alpha(3), beta(3), gamma(1), delta(1), epsilon(1). CF(0) has three main subunits: a, b and c.

The protein resides in the cell inner membrane. Its function is as follows. Produces ATP from ADP in the presence of a proton gradient across the membrane. The gamma chain is believed to be important in regulating ATPase activity and the flow of protons through the CF(0) complex. This chain is ATP synthase gamma chain, found in Burkholderia lata (strain ATCC 17760 / DSM 23089 / LMG 22485 / NCIMB 9086 / R18194 / 383).